Reading from the N-terminus, the 162-residue chain is 2-amino-4-hydroxy-6-hydroxymethyldihydropteridine pyrophosphokinase (162 aa).

It belongs to the HPPK family.

It carries out the reaction 6-hydroxymethyl-7,8-dihydropterin + ATP = (7,8-dihydropterin-6-yl)methyl diphosphate + AMP + H(+). Its pathway is cofactor biosynthesis; tetrahydrofolate biosynthesis; 2-amino-4-hydroxy-6-hydroxymethyl-7,8-dihydropteridine diphosphate from 7,8-dihydroneopterin triphosphate: step 4/4. Catalyzes the transfer of pyrophosphate from adenosine triphosphate (ATP) to 6-hydroxymethyl-7,8-dihydropterin, an enzymatic step in folate biosynthesis pathway. This chain is 2-amino-4-hydroxy-6-hydroxymethyldihydropteridine pyrophosphokinase (folK), found in Pseudomonas aeruginosa (strain ATCC 15692 / DSM 22644 / CIP 104116 / JCM 14847 / LMG 12228 / 1C / PRS 101 / PAO1).